The chain runs to 467 residues: Ethanolamine ammonia-lyase reactivase EutA (467 aa).

It belongs to the EutA family.

The protein resides in the bacterial microcompartment. The protein operates within amine and polyamine degradation; ethanolamine degradation. In terms of biological role, reactivates suicidally inhibited ethanolamine ammonia-lyase (EAL), cyanocobalamin-inactivated EAL and O(2)-inactivated EAL; requires Mg(2+), ATP and adenosylcobalamin. Reactivation probably occurs by the ATP-dependent exchange of cobalamin. Protects EAL from inhibition by CN-B12, does not have adenosylation activity. Functionally, expression of the eut operon allows this bacteria to use ethanolamine as a carbon, nitrogen and energy source. It relies on cobalamin (vitamin B12) both as a cofactor for the ethanolamine ammonia-lyase (EAL) activity and to induce the operon. EA enhances bacterial survival in macrophages in a concentration-dependent manner, suggesting it is an important nutrient during infection. The sequence is that of Ethanolamine ammonia-lyase reactivase EutA from Salmonella typhimurium (strain LT2 / SGSC1412 / ATCC 700720).